A 148-amino-acid polypeptide reads, in one-letter code: Ribonuclease 4 (148 aa).

An N-terminal signal peptide occupies residues 1 to 29 (MMDLQRTQSLLLLLVLTLLGLGLVQPSYG). Q30 carries the pyrrolidone carboxylic acid modification. DUMP is bound by residues R36, H41, K69, N72, and T73. H41 acts as the Proton acceptor in catalysis. Disulfide bonds link C54–C110, C68–C121, C86–C136, and C93–C100. H145 serves as the catalytic Proton donor. Position 146 (F146) interacts with dUMP.

This sequence belongs to the pancreatic ribonuclease family. In terms of tissue distribution, expressed in the cortical tubules of the kidney (at protein level). Also expressed in the medullary tubules of the kidney.

Its subcellular location is the secreted. Its function is as follows. Cleaves preferentially after uridine bases. Has antimicrobial activity against uropathogenic E.coli (UPEC). Probably contributes to urinary tract sterility. The protein is Ribonuclease 4 (Rnase4) of Mus musculus (Mouse).